The following is a 529-amino-acid chain: Calcium-dependent protein kinase 3 (529 aa).

The interval 1-73 (MGHRHSKSKS…GRILGRPMEE (73 aa)) is disordered. The N-myristoyl glycine moiety is linked to residue Gly-2. Residues 39-53 (SGSGTVGSSGSGTGG) show a composition bias toward gly residues. The 259-residue stretch at 78 to 336 (YEFGRELGRG…AAEVLNHPWI (259 aa)) folds into the Protein kinase domain. ATP contacts are provided by residues 84-92 (LGRGQFGVT) and Lys-107. Asp-202 functions as the Proton acceptor in the catalytic mechanism. A Phosphoserine modification is found at Ser-242. Residues 342–372 (ASDKPLDNAVLSRMKQFRAMNKLKKMALKVI) form an autoinhibitory domain region. 4 EF-hand domains span residues 379 to 414 (EEII…LGSK), 415 to 450 (ISEA…MNRI), 451 to 485 (ERED…KYNM), and 486 to 521 (GDDK…GNPE). Asp-392, Asp-394, Asn-396, Glu-403, Asp-428, Asp-430, Asp-432, Ser-434, Glu-439, Asp-464, Asp-466, Ser-468, Tyr-470, Glu-475, Asp-499, Asp-501, Asp-503, Lys-505, and Glu-510 together coordinate Ca(2+).

The protein belongs to the protein kinase superfamily. Ser/Thr protein kinase family. CDPK subfamily. As to quaternary structure, interacts with GHR1. As to expression, expressed in both guard cells and mesophyll cells.

Its subcellular location is the cytoplasm. The protein resides in the nucleus. The enzyme catalyses L-seryl-[protein] + ATP = O-phospho-L-seryl-[protein] + ADP + H(+). It carries out the reaction L-threonyl-[protein] + ATP = O-phospho-L-threonyl-[protein] + ADP + H(+). With respect to regulation, activated by calcium. Autophosphorylation may play an important role in the regulation of the kinase activity. Functionally, may play a role in signal transduction pathways that involve calcium as a second messenger. Functions in abscisic acid (ABA) regulation of guard cell S-type anion- and Ca(2+)-permeable channels and stomatal closure. The sequence is that of Calcium-dependent protein kinase 3 from Arabidopsis thaliana (Mouse-ear cress).